The sequence spans 91 residues: RNA-binding protein Hfq (91 aa).

Residues 9–68 (DPYLNALRRERIPVSIYLVNGIKLQGQIESFDQFVILLKNTVNQMVYKHAISTVVPARSV) form the Sm domain. Residues 69–91 (SHHNNNHHTAPTEAVENVETQAE) are disordered.

The protein belongs to the Hfq family. In terms of assembly, homohexamer.

In terms of biological role, RNA chaperone that binds small regulatory RNA (sRNAs) and mRNAs to facilitate mRNA translational regulation in response to envelope stress, environmental stress and changes in metabolite concentrations. Also binds with high specificity to tRNAs. This chain is RNA-binding protein Hfq, found in Haemophilus influenzae (strain ATCC 51907 / DSM 11121 / KW20 / Rd).